Here is a 244-residue protein sequence, read N- to C-terminus: Diablo homolog, mitochondrial (244 aa).

The N-terminal 38 residues, 1-38 (MASLPRRLIWSFSYILRESFPIVSRRNCVSLLRASWRK), are a transit peptide targeting the mitochondrion. The IAP-binding signature appears at 50–54 (AIPVG). Residues 207 to 218 (DEIKRTITEDKG) are compositionally biased toward basic and acidic residues. The segment at 207–244 (DEIKRTITEDKGNPPSGGSPRSSLSEEEEIPEAYLRED) is disordered. Positions 220–229 (PPSGGSPRSS) are enriched in low complexity.

It belongs to the Smac/DIABLO protein family. As to quaternary structure, homodimer.

It is found in the mitochondrion. Functionally, promotes apoptosis. Acts by opposing the inhibitory activity of inhibitor of apoptosis proteins (IAP). The protein is Diablo homolog, mitochondrial of Xenopus tropicalis (Western clawed frog).